A 443-amino-acid chain; its full sequence is MSMTTTRFAPSPTGYIHVGNLRTALMNYLIARKAGGTFILRIDDTDPERSKEEYVDAIKQDLDWLGLHWDRVERQSERLDRYAEAADKLRAMGRFYEAFETPTELDLKRKKQLNMGKPPVYDRAALALSEGEKEALRAERGNGVWRFKLDQERIEWTDGILGDISIDAASVSDPVLIRGDGQVLYTLASVVDDTDMGVTDVVRGSDHVTNTATQIQIMAALGFEHPRFAHHSLLTGPQGEALSKRLGTLALRDLREQGVQPMALLSLMARLGSSDPVELRSDMAELIEGFDVTRFGAAPTKFDVQDLFPLTGRYLQALPLEAVAKDVAAAGVPEDLAAPFWSMARENITTLNDLAGWWALCRDGAEPLIADEDRAFVTEAMALLPEGPLDADSWGAWTQAVKEATGRKGKGLFMPLRKAVTGMERGPEMATLLPLMQVIRARG.

The short motif at 10-20 is the 'HIGH' region element; the sequence is PSPTGYIHVGN. The 'KMSKS' region motif lies at 241-245; that stretch reads ALSKR. Residue Lys-244 coordinates ATP.

The protein belongs to the class-I aminoacyl-tRNA synthetase family. Glutamate--tRNA ligase type 1 subfamily. As to quaternary structure, monomer.

It is found in the cytoplasm. The enzyme catalyses tRNA(Glu) + L-glutamate + ATP = L-glutamyl-tRNA(Glu) + AMP + diphosphate. Functionally, catalyzes the attachment of glutamate to tRNA(Glu) in a two-step reaction: glutamate is first activated by ATP to form Glu-AMP and then transferred to the acceptor end of tRNA(Glu). This Ruegeria pomeroyi (strain ATCC 700808 / DSM 15171 / DSS-3) (Silicibacter pomeroyi) protein is Glutamate--tRNA ligase 1.